We begin with the raw amino-acid sequence, 621 residues long: 1-deoxy-D-xylulose-5-phosphate synthase (621 aa).

Thiamine diphosphate contacts are provided by residues H80 and 121-123; that span reads GHS. D152 serves as a coordination point for Mg(2+). Thiamine diphosphate contacts are provided by residues 153–154, N181, Y288, and E370; that span reads GA. N181 serves as a coordination point for Mg(2+).

This sequence belongs to the transketolase family. DXPS subfamily. In terms of assembly, homodimer. The cofactor is Mg(2+). It depends on thiamine diphosphate as a cofactor.

It catalyses the reaction D-glyceraldehyde 3-phosphate + pyruvate + H(+) = 1-deoxy-D-xylulose 5-phosphate + CO2. It functions in the pathway metabolic intermediate biosynthesis; 1-deoxy-D-xylulose 5-phosphate biosynthesis; 1-deoxy-D-xylulose 5-phosphate from D-glyceraldehyde 3-phosphate and pyruvate: step 1/1. Catalyzes the acyloin condensation reaction between C atoms 2 and 3 of pyruvate and glyceraldehyde 3-phosphate to yield 1-deoxy-D-xylulose-5-phosphate (DXP). The sequence is that of 1-deoxy-D-xylulose-5-phosphate synthase from Aeromonas hydrophila subsp. hydrophila (strain ATCC 7966 / DSM 30187 / BCRC 13018 / CCUG 14551 / JCM 1027 / KCTC 2358 / NCIMB 9240 / NCTC 8049).